Consider the following 193-residue polypeptide: Ras-like protein 2 (193 aa).

12-19 is a GTP binding site; sequence GGGGVGKS. The Effector region motif lies at 34 to 42; the sequence is YDPTIEDSY. GTP-binding positions include 59-63 and 118-121; these read DTAGQ and NKCD. Position 190 is a cysteine methyl ester (cysteine 190). Residue cysteine 190 is the site of S-geranylgeranyl cysteine attachment. Residues 191 to 193 constitute a propeptide, removed in mature form; it reads KLL.

It belongs to the small GTPase superfamily. Ras family.

Its subcellular location is the cell membrane. It carries out the reaction GTP + H2O = GDP + phosphate + H(+). Its function is as follows. Ras proteins bind GDP/GTP and possess intrinsic GTPase activity. The polypeptide is Ras-like protein 2 (RAS-2) (Physarum polycephalum (Slime mold)).